We begin with the raw amino-acid sequence, 569 residues long: Protein THEMIS3 (569 aa).

2 CABIT regions span residues 1–254 and 255–523; these read MEQT…ARLD and RKPR…EERS.

This sequence belongs to the themis family. Specifically expressed in the intestine.

This Mus musculus (Mouse) protein is Protein THEMIS3 (Themis3).